A 612-amino-acid polypeptide reads, in one-letter code: BTB/POZ domain-containing protein 9 (612 aa).

Positions 36–104 (GDVTFVVEKK…IYTGRATLTD (69 aa)) constitute a BTB domain. Residues 142–240 (VCMTFDVASL…SLTELLNVVR (99 aa)) enclose the BACK domain. A disordered region spans residues 559–612 (QQSNQKEDSSEEPGTGDPSTPNQQLDPHAPRAPSASSLPPSPGPNSRSPNQQNQ). Positions 589-612 (RAPSASSLPPSPGPNSRSPNQQNQ) are enriched in low complexity.

As to expression, expressed in the brain (at protein level).

The chain is BTB/POZ domain-containing protein 9 (Btbd9) from Mus musculus (Mouse).